A 734-amino-acid polypeptide reads, in one-letter code: Probable inactive histone-lysine N-methyltransferase SUVR1 (734 aa).

Positions 61-163 are disordered; the sequence is QSTEKNKKEE…LPPLKRYVRR (103 aa). A compositionally biased stretch (basic and acidic residues) spans 62-81; sequence STEKNKKEEEKKKKEEEKKS. Acidic residues predominate over residues 98-109; the sequence is VQDEEDDMDEDE. Basic residues predominate over residues 113 to 122; that stretch reads KRRLRSRRGR. A compositionally biased stretch (low complexity) spans 123-132; sequence ASSSSSSSSS. The Zn(2+) site is built by cysteine 460, cysteine 464, cysteine 468, cysteine 477, cysteine 545, cysteine 549, cysteine 551, and cysteine 555. One can recognise a Pre-SET domain in the interval 460 to 563; that stretch reads CSTSCIEDCL…RCGNRVVQRG (104 aa). Positions 566–696 constitute an SET domain; the sequence is NKLQVFFTPN…AMEELAWDYG (131 aa). Residues 577 to 579 and 652 to 653 contribute to the S-adenosyl-L-methionine site; these read KGW and NH. Cysteine 655 provides a ligand contact to Zn(2+). Residue tyrosine 695 coordinates S-adenosyl-L-methionine. Residues 707-723 enclose the Post-SET domain; it reads KPFDCLCGSRFCRNKKR. Residues cysteine 711, cysteine 713, and cysteine 718 each contribute to the Zn(2+) site.

It belongs to the class V-like SAM-binding methyltransferase superfamily. Histone-lysine methyltransferase family. Interacts with SUVR2 and itself.

It is found in the nucleus. The protein resides in the chromosome. Probable inactive histone-lysine methyltransferase that acts as regulator of transctiptional gene silencing independently of histone H3K9 methylation. Contributes to transcriptional gene silencing at RNA-directed DNA methylation (RdDM) target loci but also at RdDM-independent target loci. In Arabidopsis thaliana (Mouse-ear cress), this protein is Probable inactive histone-lysine N-methyltransferase SUVR1 (SUVR1).